The sequence spans 118 residues: UPF0102 protein Bcav_2532 (118 aa).

This sequence belongs to the UPF0102 family.

The chain is UPF0102 protein Bcav_2532 from Beutenbergia cavernae (strain ATCC BAA-8 / DSM 12333 / CCUG 43141 / JCM 11478 / NBRC 16432 / NCIMB 13614 / HKI 0122).